Consider the following 162-residue polypeptide: MPETDFEEKMILIRRTARMQAGGRRFRFGALVVVGDRQGRVGLGFGKAPEVPLAVQKAGYYARRNMVEVPLQNGTIPHEIEVEFGASKIVLKPAAPGTGVIAGAVPRAILELAGVTDILTKELGSRNPINIAYATMEALRQLRTKADVERLRKGEAHAQAQG.

In terms of domain architecture, S5 DRBM spans 7–70 (EEKMILIRRT…YARRNMVEVP (64 aa)).

The protein belongs to the universal ribosomal protein uS5 family. As to quaternary structure, part of the 30S ribosomal subunit. Contacts proteins S4 and S8.

Its function is as follows. With S4 and S12 plays an important role in translational accuracy. In terms of biological role, located at the back of the 30S subunit body where it stabilizes the conformation of the head with respect to the body. In Thermus thermophilus (strain ATCC BAA-163 / DSM 7039 / HB27), this protein is Small ribosomal subunit protein uS5 (rpsE).